The following is a 497-amino-acid chain: Glycerol kinase (497 aa).

An ADP-binding site is contributed by Thr13. Thr13, Thr14, and Ser15 together coordinate ATP. A sn-glycerol 3-phosphate-binding site is contributed by Thr13. Arg17 contacts ADP. Sn-glycerol 3-phosphate is bound by residues Arg83, Glu84, and Tyr135. Glycerol-binding residues include Arg83, Glu84, and Tyr135. At His231 the chain carries Phosphohistidine; by HPr. Asp245 contributes to the sn-glycerol 3-phosphate binding site. Glycerol contacts are provided by Asp245 and Gln246. ADP contacts are provided by Thr267 and Gly310. ATP-binding residues include Thr267, Gly310, Gln314, and Gly411. Residues Gly411 and Asn415 each coordinate ADP.

Belongs to the FGGY kinase family. Homotetramer and homodimer (in equilibrium). In terms of processing, the phosphoenolpyruvate-dependent sugar phosphotransferase system (PTS), including enzyme I, and histidine-containing protein (HPr) are required for the phosphorylation, which leads to the activation of the enzyme.

The enzyme catalyses glycerol + ATP = sn-glycerol 3-phosphate + ADP + H(+). The protein operates within polyol metabolism; glycerol degradation via glycerol kinase pathway; sn-glycerol 3-phosphate from glycerol: step 1/1. Its activity is regulated as follows. Activated by phosphorylation and inhibited by fructose 1,6-bisphosphate (FBP). Key enzyme in the regulation of glycerol uptake and metabolism. Catalyzes the phosphorylation of glycerol to yield sn-glycerol 3-phosphate. This is Glycerol kinase from Listeria welshimeri serovar 6b (strain ATCC 35897 / DSM 20650 / CCUG 15529 / CIP 8149 / NCTC 11857 / SLCC 5334 / V8).